A 275-amino-acid polypeptide reads, in one-letter code: 2,3,4,5-tetrahydropyridine-2,6-dicarboxylate N-succinyltransferase (275 aa).

Residues R104 and D141 each coordinate substrate.

Belongs to the transferase hexapeptide repeat family. Homotrimer.

The protein localises to the cytoplasm. It carries out the reaction (S)-2,3,4,5-tetrahydrodipicolinate + succinyl-CoA + H2O = (S)-2-succinylamino-6-oxoheptanedioate + CoA. It functions in the pathway amino-acid biosynthesis; L-lysine biosynthesis via DAP pathway; LL-2,6-diaminopimelate from (S)-tetrahydrodipicolinate (succinylase route): step 1/3. This is 2,3,4,5-tetrahydropyridine-2,6-dicarboxylate N-succinyltransferase from Haemophilus influenzae (strain PittEE).